Here is a 157-residue protein sequence, read N- to C-terminus: MSDEEHTFENADAGASATYPMQCSALRKNGFVVIKGRPCKIVDMSTSKTGKHGHAKVHLVTLDIFTGKKLEDLSPSTHNLEVPFVKRSEYQLLDIDDGYLSLMTMDGETKDDVKAPEGELGDSMQAAFDEGKDLMVTIISAMGEEAAISFKEAPRSD.

An N-acetylserine modification is found at Ser-2. Ser-2 carries the phosphoserine modification. Thr-7 carries the post-translational modification Phosphothreonine. At Lys-51 the chain carries Hypusine. A Phosphoserine modification is found at Ser-74. Lys-86 is covalently cross-linked (Glycyl lysine isopeptide (Lys-Gly) (interchain with G-Cter in ubiquitin)).

Belongs to the eIF-5A family. Homodimer. Binds to 80S ribosomes. Actively translating ribosomes show mutually exclusive binding of eIF5a (HYP2 or ANB1) and EFT1/eEF2. Interacts with DYS1 and LIA1. Lys-51 undergoes hypusination, a unique post-translational modification that consists in the addition of a butylamino group from spermidine to lysine side chain, leading to the formation of the unusual amino acid hypusine. eIF-5As are the only known proteins to undergo this modification, which is essential for their function.

Its subcellular location is the cytoplasm. Translation factor that promotes translation elongation and termination, particularly upon ribosome stalling at specific amino acid sequence contexts. Binds between the exit (E) and peptidyl (P) site of the ribosome and promotes rescue of stalled ribosome: specifically required for efficient translation of polyproline-containing peptides as well as other motifs that stall the ribosome. Acts as ribosome quality control (RQC) cofactor by joining the RQC complex to facilitate peptidyl transfer during CAT tailing step. Involved in actin dynamics and cell cycle progression, mRNA decay and probably in a pathway involved in stress response and maintenance of cell wall integrity. In Saccharomyces cerevisiae (strain ATCC 204508 / S288c) (Baker's yeast), this protein is Eukaryotic translation initiation factor 5A-2 (ANB1).